Here is a 547-residue protein sequence, read N- to C-terminus: Dihydroxy-acid dehydratase (547 aa).

Position 78 (aspartate 78) interacts with Mg(2+). Cysteine 119 lines the [2Fe-2S] cluster pocket. Mg(2+)-binding residues include aspartate 120 and lysine 121. Lysine 121 is subject to N6-carboxylysine. Cysteine 191 is a [2Fe-2S] cluster binding site. Glutamate 439 lines the Mg(2+) pocket. Residue serine 464 is the Proton acceptor of the active site.

Belongs to the IlvD/Edd family. As to quaternary structure, homodimer. It depends on [2Fe-2S] cluster as a cofactor. The cofactor is Mg(2+).

The enzyme catalyses (2R)-2,3-dihydroxy-3-methylbutanoate = 3-methyl-2-oxobutanoate + H2O. It carries out the reaction (2R,3R)-2,3-dihydroxy-3-methylpentanoate = (S)-3-methyl-2-oxopentanoate + H2O. It functions in the pathway amino-acid biosynthesis; L-isoleucine biosynthesis; L-isoleucine from 2-oxobutanoate: step 3/4. Its pathway is amino-acid biosynthesis; L-valine biosynthesis; L-valine from pyruvate: step 3/4. Functions in the biosynthesis of branched-chain amino acids. Catalyzes the dehydration of (2R,3R)-2,3-dihydroxy-3-methylpentanoate (2,3-dihydroxy-3-methylvalerate) into 2-oxo-3-methylpentanoate (2-oxo-3-methylvalerate) and of (2R)-2,3-dihydroxy-3-methylbutanoate (2,3-dihydroxyisovalerate) into 2-oxo-3-methylbutanoate (2-oxoisovalerate), the penultimate precursor to L-isoleucine and L-valine, respectively. This chain is Dihydroxy-acid dehydratase, found in Archaeoglobus fulgidus (strain ATCC 49558 / DSM 4304 / JCM 9628 / NBRC 100126 / VC-16).